A 130-amino-acid chain; its full sequence is Large ribosomal subunit protein bL19 (130 aa).

It belongs to the bacterial ribosomal protein bL19 family.

In terms of biological role, this protein is located at the 30S-50S ribosomal subunit interface and may play a role in the structure and function of the aminoacyl-tRNA binding site. This is Large ribosomal subunit protein bL19 from Mycoplasma capricolum subsp. capricolum (strain California kid / ATCC 27343 / NCTC 10154).